The following is a 334-amino-acid chain: Glutaminase (334 aa).

Positions 76, 126, 170, 177, 201, 253, and 271 each coordinate substrate.

The protein belongs to the glutaminase family. Homotetramer.

The catalysed reaction is L-glutamine + H2O = L-glutamate + NH4(+). The protein is Glutaminase of Trichormus variabilis (strain ATCC 29413 / PCC 7937) (Anabaena variabilis).